Here is a 127-residue protein sequence, read N- to C-terminus: uncharacterized protein (127 aa).

An N-terminal signal peptide occupies residues 1–16 (MIKKIIFGIAILLSTS). The N-palmitoyl cysteine moiety is linked to residue Cys-17. Cys-17 is lipidated: S-diacylglycerol cysteine. Residues 56 to 101 (EVREEIQKYRVAIVKINKKKRELYNRLSKEAQNFLAEQQKYKQKLS) adopt a coiled-coil conformation. Residues 107–118 (VENDQKNNTADS) show a composition bias toward polar residues. The interval 107–127 (VENDQKNNTADSNDNKSKDTK) is disordered.

It is found in the cell membrane. This is an uncharacterized protein from Rickettsia conorii (strain ATCC VR-613 / Malish 7).